The chain runs to 355 residues: Guanine nucleotide-binding protein G(z) subunit alpha (355 aa).

A compositionally biased stretch (basic and acidic residues) spans 1 to 14 (MGCRQSSEEKEAAR). The interval 1–26 (MGCRQSSEEKEAARRSRRIDRHLRSE) is disordered. Gly-2 carries the N-myristoyl glycine lipid modification. Residue Cys-3 is the site of S-palmitoyl cysteine attachment. Residues 32 to 355 (REIKLLLLGT…QNNLKYIGLC (324 aa)) form the G-alpha domain. Residues 35-48 (KLLLLGTSNSGKST) are G1 motif. GTP is bound by residues 40 to 47 (GTSNSGKS), 176 to 182 (LRSRDMT), 201 to 205 (DVGGQ), 270 to 273 (NKKD), and Ala-327. Ser-47 is a binding site for Mg(2+). Positions 174–182 (DILRSRDMT) are G2 motif. At Arg-179 the chain carries ADP-ribosylarginine; by cholera toxin. Thr-182 lines the Mg(2+) pocket. The interval 197–206 (FKMVDVGGQR) is G3 motif. Residues 266–273 (ILFLNKKD) form a G4 motif region. Residues 325–330 (TCATDT) form a G5 motif region.

This sequence belongs to the G-alpha family. G(i/o/t/z) subfamily. In terms of assembly, G-proteins are composed of 3 units; alpha, beta and gamma. The alpha chain contains the guanine nucleotide binding site. Interacts with ADGRB2.

Its subcellular location is the membrane. In terms of biological role, guanine nucleotide-binding proteins (G proteins) are involved as modulators or transducers in various transmembrane signaling systems. The protein is Guanine nucleotide-binding protein G(z) subunit alpha (GNAZ) of Homo sapiens (Human).